A 365-amino-acid chain; its full sequence is Peptide chain release factor 2 (365 aa).

The residue at position 252 (Gln-252) is an N5-methylglutamine.

The protein belongs to the prokaryotic/mitochondrial release factor family. In terms of processing, methylated by PrmC. Methylation increases the termination efficiency of RF2.

It is found in the cytoplasm. In terms of biological role, peptide chain release factor 2 directs the termination of translation in response to the peptide chain termination codons UGA and UAA. In Shigella flexneri, this protein is Peptide chain release factor 2.